A 156-amino-acid chain; its full sequence is Endogenous retrovirus group K member 104 Pro protein (156 aa).

A Peptidase A2 domain is found at 21–96 (FEGLVDTEAD…IPLNLWGQDL (76 aa)). Asp26 is a catalytic residue. The region spanning 111–156 (YSPTSQKIMTKMGYIPGKGLGKNEDGIKVPVEAKINQKREGIGYPF) is the G-patch domain.

Belongs to the peptidase A2 family. HERV class-II K(HML-2) subfamily. In terms of assembly, active as a homodimer. Post-translationally, autoproteolytically processed at the N-terminus. Expected C-terminal autoprocessing not detected. The sequence shown is that of the processed Pro protein.

It carries out the reaction Processing at the authentic HIV-1 PR recognition site and release of the mature p17 matrix and the p24 capsid protein, as a result of the cleavage of the -SQNY-|-PIVQ- cleavage site.. Functionally, retroviral proteases have roles in the processing of the primary translation products and the maturation of the viral particle. Endogenous Pro proteins may have kept, lost or modified their original function during evolution. This is Endogenous retrovirus group K member 104 Pro protein (HERV-K104) from Homo sapiens (Human).